A 153-amino-acid polypeptide reads, in one-letter code: MSDVQERLKKLGLGARTGTGKGTPRRKVKRAPARSGADDKKLQLALKKLNTQPIQAIEEVNMFKQDGNVIHFAAPKVHAAVPSNTFAIYGNGEDKELTELVPGILNQLGPDSLASLRKLAESYQNLQKEKGEDDDEIPDLVEGENFEGEPKVE.

Disordered stretches follow at residues 1-40 (MSDV…ADDK) and 126-153 (LQKE…PKVE). Residues 23 to 32 (TPRRKVKRAP) show a composition bias toward basic residues. The NAC-A/B domain maps to 36–101 (GADDKKLQLA…GEDKELTELV (66 aa)). Acidic residues predominate over residues 132-147 (EDDDEIPDLVEGENFE).

This sequence belongs to the NAC-beta family. In terms of assembly, part of the nascent polypeptide-associated complex (NAC), consisting of EGD2 and EGD1. NAC associates with ribosomes via EGD1.

The protein resides in the cytoplasm. The protein localises to the nucleus. Functionally, component of the nascent polypeptide-associated complex (NAC), a dynamic component of the ribosomal exit tunnel, protecting the emerging polypeptides from interaction with other cytoplasmic proteins to ensure appropriate nascent protein targeting. The NAC complex also promotes mitochondrial protein import by enhancing productive ribosome interactions with the outer mitochondrial membrane and blocks the inappropriate interaction of ribosomes translating non-secretory nascent polypeptides with translocation sites in the membrane of the endoplasmic reticulum. EGD1 may act as a transcription factor that exert a negative effect on the expression of several genes that are transcribed by RNA polymerase II. In Gibberella zeae (strain ATCC MYA-4620 / CBS 123657 / FGSC 9075 / NRRL 31084 / PH-1) (Wheat head blight fungus), this protein is Nascent polypeptide-associated complex subunit beta (EGD1).